The primary structure comprises 372 residues: Homoserine O-acetyltransferase (372 aa).

In terms of domain architecture, AB hydrolase-1 spans 43 to 353 (NAILIFHALT…DKGHDSFLLK (311 aa)). The active-site Nucleophile is serine 148. Arginine 218 contacts substrate. Catalysis depends on residues aspartate 314 and histidine 347. Aspartate 348 contacts substrate.

This sequence belongs to the AB hydrolase superfamily. MetX family. In terms of assembly, homodimer.

Its subcellular location is the cytoplasm. It catalyses the reaction L-homoserine + acetyl-CoA = O-acetyl-L-homoserine + CoA. It participates in amino-acid biosynthesis; L-methionine biosynthesis via de novo pathway; O-acetyl-L-homoserine from L-homoserine: step 1/1. Functionally, transfers an acetyl group from acetyl-CoA to L-homoserine, forming acetyl-L-homoserine. In Pelagibacter ubique (strain HTCC1062), this protein is Homoserine O-acetyltransferase.